Here is a 227-residue protein sequence, read N- to C-terminus: MICOS complex subunit Mic19 (227 aa).

Gly2 is lipidated: N-myristoyl glycine. Ser29 bears the Phosphoserine mark. The segment at 32 to 57 (VIDRMKESSPSGSKSQRYSSVYGASV) is disordered. Polar residues predominate over residues 39–50 (SSPSGSKSQRYS). Residue Tyr49 is modified to Phosphotyrosine. Phosphoserine is present on residues Ser50, Ser51, Ser56, and Ser58. The interval 73–92 (EQAKKESEHQRRLKQARDLE) is disordered. Lys142 is subject to N6-acetyllysine. A CHCH domain is found at 180 to 222 (HPVCADLQTKILQCYRQNTQQTLSCSALASQYMHCVNHAKQSM). Short sequence motifs (cx9C motif) lie at residues 183–193 (CADLQTKILQC) and 204–214 (CSALASQYMHC). 2 disulfides stabilise this stretch: Cys183–Cys214 and Cys193–Cys204.

It belongs to the MICOS complex subunit Mic19 family. Metazoan Mic19 subfamily. Component of the mitochondrial contact site and cristae organizing system (MICOS) complex, composed of at least MICOS10/MIC10, CHCHD3/MIC19, CHCHD6/MIC25, APOOL/MIC27, IMMT/MIC60, APOO/MIC23/MIC26 and MICOS13/MIC13. This complex was also known under the names MINOS or MitOS complex. The MICOS complex associates with mitochondrial outer membrane proteins SAMM50, MTX1 and MTX2 (together described as components of the mitochondrial outer membrane sorting assembly machinery (SAM) complex) and DNAJC11, mitochondrial inner membrane protein TMEM11 and with HSPA9. The MICOS and SAM complexes together with DNAJC11 are part of a large protein complex spanning both membranes termed the mitochondrial intermembrane space bridging (MIB) complex. Interacts with HSPA1A/HSPA1B and OPA1, preferentially with the soluble OPA1 form.

The protein resides in the mitochondrion inner membrane. It is found in the cytoplasm. It localises to the nucleus. Its subcellular location is the mitochondrion. Component of the MICOS complex, a large protein complex of the mitochondrial inner membrane that plays crucial roles in the maintenance of crista junctions, inner membrane architecture, and formation of contact sites to the outer membrane. Has also been shown to function as a transcription factor which binds to the BAG1 promoter and represses BAG1 transcription. Plays an important role in the maintenance of the MICOS complex stability and the mitochondrial cristae morphology. The chain is MICOS complex subunit Mic19 (Chchd3) from Mus musculus (Mouse).